We begin with the raw amino-acid sequence, 495 residues long: ATP synthase subunit beta (495 aa).

178-185 (GGAGVGKT) serves as a coordination point for ATP.

It belongs to the ATPase alpha/beta chains family. In terms of assembly, F-type ATPases have 2 components, CF(1) - the catalytic core - and CF(0) - the membrane proton channel. CF(1) has five subunits: alpha(3), beta(3), gamma(1), delta(1), epsilon(1). CF(0) has three main subunits: a(1), b(2) and c(9-12). The alpha and beta chains form an alternating ring which encloses part of the gamma chain. CF(1) is attached to CF(0) by a central stalk formed by the gamma and epsilon chains, while a peripheral stalk is formed by the delta and b chains.

The protein localises to the cell membrane. The enzyme catalyses ATP + H2O + 4 H(+)(in) = ADP + phosphate + 5 H(+)(out). Its function is as follows. Produces ATP from ADP in the presence of a proton gradient across the membrane. The catalytic sites are hosted primarily by the beta subunits. This is ATP synthase subunit beta from Bifidobacterium animalis subsp. lactis (strain AD011).